The sequence spans 259 residues: AM-toxin biosynthesis protein 11 (259 aa).

Positions 39-66 are disordered; the sequence is RRSRRRPEEESIQSLSKHVSTTTQPCPT. The span at 50-64 shows a compositional bias: polar residues; sequence IQSLSKHVSTTTQPC.

The protein operates within mycotoxin biosynthesis. In terms of biological role, part of the gene clusters that mediate the biosynthesis of AM-toxins, host-selective toxins (HSTs) causing Alternaria blotch on apple, a worldwide distributed disease. AM-toxins are cyclic depsipeptides containing the 3 residues 2-hydroxy-isovaleric acid (2-HIV), dehydroalanine, L-alanine which are common for all 3 AM-toxins I to III. The fourth precursor is L-alpha-amino-methoxyphenyl-valeric acid (L-Amv) for AM-toxin I, L-alpha-amino-phenyl-valeric acid (L-Apv) for AM-toxin II, and L-alpha-amino-hydroxyphenyl-valeric acid (L-Ahv) for AM-toxin III. AM-toxins have two target sites for affecting susceptible apple cells; they cause invagination of the plasma membrane and electrolyte loss and chloroplast disorganization. The non-ribosomal peptide synthetase AMT1 contains 4 catalytic modules and is responsible for activation of each residue in AM-toxin. The aldo-keto reductase AMT2 catalyzes the conversion of 2-keto-isovaleric acid (2-KIV) to 2-hydroxy-isovaleric acid (2-HIV), one of the precursor residues incorporated by AMT1 during AM-toxin biosynthesis, by reduction of its ketone to an alcohol. The cytochrome P450 monooxygenase AMT3 and the thioesterase AMT4 are also important for AM-toxin production, but their exact function within the AM-toxin biosynthesis are not known yet. Up to 21 proteins (including AMT1 to AMT4) are predicted to be involved in AM-toxin biosynthesis since their expression ishighly up-regulated in AM-toxin-producing cultures. This Alternaria alternata (Alternaria rot fungus) protein is AM-toxin biosynthesis protein 11.